A 426-amino-acid polypeptide reads, in one-letter code: Meiotically up-regulated gene 170 protein (426 aa).

It belongs to the arrestin family.

Its subcellular location is the cytoplasm. The protein resides in the nucleus. Has a role in meiosis. The protein is Meiotically up-regulated gene 170 protein (mug170) of Schizosaccharomyces pombe (strain 972 / ATCC 24843) (Fission yeast).